Here is a 1450-residue protein sequence, read N- to C-terminus: DNA-directed RNA polymerase RPB1 homolog (1450 aa).

It belongs to the RNA polymerase beta' chain family. In terms of assembly, part of the viral DNA-directed RNA polymerase that consists of 8 polII-like subunits (RPB1, RPB2, RPB3, RPB5, RPB6, RPB7, RPB9, RPB10), a capping enzyme and a termination factor.

The protein resides in the virion. It catalyses the reaction RNA(n) + a ribonucleoside 5'-triphosphate = RNA(n+1) + diphosphate. Functionally, catalytic component of the DNA-directed RNA polymerase (RNAP) that catalyzes the transcription in the cytoplasm of viral DNA into RNA using the four ribonucleoside triphosphates as substrates. Forms the polymerase active center together with RPB2. Part of the core element with the central large cleft, the clamp element that moves to open and close the cleft and the jaws that are thought to grab the incoming DNA template. The polypeptide is DNA-directed RNA polymerase RPB1 homolog (African swine fever virus (strain Badajoz 1971 Vero-adapted) (Ba71V)).